A 150-amino-acid chain; its full sequence is UPF0201 protein APE_1751 (150 aa).

This sequence belongs to the UPF0201 family.

In Aeropyrum pernix (strain ATCC 700893 / DSM 11879 / JCM 9820 / NBRC 100138 / K1), this protein is UPF0201 protein APE_1751.